The following is a 502-amino-acid chain: Lysine--tRNA ligase (502 aa).

2 residues coordinate Mg(2+): Glu411 and Glu418.

Belongs to the class-II aminoacyl-tRNA synthetase family. Homodimer. Requires Mg(2+) as cofactor.

The protein localises to the cytoplasm. It catalyses the reaction tRNA(Lys) + L-lysine + ATP = L-lysyl-tRNA(Lys) + AMP + diphosphate. This Clostridium tetani (strain Massachusetts / E88) protein is Lysine--tRNA ligase.